A 692-amino-acid chain; its full sequence is Elongation factor G (692 aa).

Residues asparagine 8–threonine 283 enclose the tr-type G domain. GTP contacts are provided by residues alanine 17–threonine 24, aspartate 81–histidine 85, and asparagine 135–aspartate 138.

It belongs to the TRAFAC class translation factor GTPase superfamily. Classic translation factor GTPase family. EF-G/EF-2 subfamily.

The protein localises to the cytoplasm. Its function is as follows. Catalyzes the GTP-dependent ribosomal translocation step during translation elongation. During this step, the ribosome changes from the pre-translocational (PRE) to the post-translocational (POST) state as the newly formed A-site-bound peptidyl-tRNA and P-site-bound deacylated tRNA move to the P and E sites, respectively. Catalyzes the coordinated movement of the two tRNA molecules, the mRNA and conformational changes in the ribosome. This chain is Elongation factor G, found in Helicobacter acinonychis (strain Sheeba).